We begin with the raw amino-acid sequence, 367 residues long: Transcription factor aptf-2 (367 aa).

A disordered region spans residues 29-49 (VPATKETGPSSSAECSTQPAV). The segment covering 36 to 47 (GPSSSAECSTQP) has biased composition (polar residues). Residues 220-354 (AKQKAFPNKV…GVASELRRLT (135 aa)) are H-S-H (helix-span-helix), dimerization.

The protein belongs to the AP-2 family. As to quaternary structure, binds DNA as a dimer.

The protein resides in the nucleus. It is found in the cytoplasm. Sequence-specific DNA-binding protein that interacts with enhancer elements to regulate transcription of selected genes. Required for neuroblast and epidermal morphogenesis, perhaps acting in cooperation with transcription factor aptf-4. In Caenorhabditis elegans, this protein is Transcription factor aptf-2.